The chain runs to 96 residues: Large ribosomal subunit protein bL21 (96 aa).

Belongs to the bacterial ribosomal protein bL21 family. In terms of assembly, part of the 50S ribosomal subunit. Contacts protein L20.

In terms of biological role, this protein binds to 23S rRNA in the presence of protein L20. The protein is Large ribosomal subunit protein bL21 of Chlorobium phaeobacteroides (strain BS1).